The chain runs to 132 residues: ATP synthase epsilon chain (132 aa).

This sequence belongs to the ATPase epsilon chain family. In terms of assembly, F-type ATPases have 2 components, CF(1) - the catalytic core - and CF(0) - the membrane proton channel. CF(1) has five subunits: alpha(3), beta(3), gamma(1), delta(1), epsilon(1). CF(0) has three main subunits: a, b and c.

It is found in the cell membrane. In terms of biological role, produces ATP from ADP in the presence of a proton gradient across the membrane. In Brevibacillus brevis (strain 47 / JCM 6285 / NBRC 100599), this protein is ATP synthase epsilon chain.